A 1017-amino-acid polypeptide reads, in one-letter code: Voltage-gated delayed rectifier potassium channel KCNH4 (1017 aa).

Residues 1–228 (MPVMKGLLAP…LLHYSVSKAI (228 aa)) are Cytoplasmic-facing. The region spanning 14–90 (FLDTIATRFD…QRLHKALEGH (77 aa)) is the PAS domain. The PAC domain maps to 93-145 (HRAEICFYRKDGSAFWCLLDMMPIKNEMGEVVLFLFSFKDITQSGSPGLGPQG). Residues 138–157 (SPGLGPQGGRGDSNHENSLG) form a disordered region. Residues 139–148 (PGLGPQGGRG) show a composition bias toward gly residues. The chain crosses the membrane as a helical span at residues 229–249 (WDGLILLATFYVAVTVPYNVC). Over 250-259 (FSGDDDTPIT) the chain is Extracellular. Residues 260–280 (SRHTLVSDIAVEMLFILDIIL) traverse the membrane as a helical segment. The Cytoplasmic portion of the chain corresponds to 281–302 (NFRTTYVSQSGQVISAPRSIGL). A helical transmembrane segment spans residues 303-323 (HYLATWFFIDLIAALPFDLLY). At 324–332 (IFNITVTSL) the chain is on the extracellular side. The N-linked (GlcNAc...) asparagine glycan is linked to N326. Residues 333–353 (VHLLKTVRLLRLLRLLQKLER) form a helical; Voltage-sensor membrane-spanning segment. At 354–361 (YSQCSAVV) the chain is on the cytoplasmic side. The helical transmembrane segment at 362–382 (LTLLMSVFALLAHWMACIWYV) threads the bilayer. The Extracellular segment spans residues 383-427 (IGRREMEANDPLLWDIGWLHELGKRLEVPYVNGSVGGPSRRSAYI). N414 is a glycosylation site (N-linked (GlcNAc...) asparagine). An intramembrane region (pore-forming) is located at residues 428-448 (AALYFTLSSLTSVGFGNVCAN). Residues 439–444 (SVGFGN) carry the Selectivity filter motif. The Extracellular portion of the chain corresponds to 449–482 (TDAEKIFSICTMLIGALMHAVVFGNVTAIIQRMY). The N-linked (GlcNAc...) asparagine glycan is linked to N473. A helical membrane pass occupies residues 483 to 503 (SRRSLYHSRMKDLKDFIRVHR). At 504–1017 (LPRPLKQRML…SFQSRSDTFH (514 aa)) the chain is on the cytoplasmic side. The segment at 556-620 (LFGAASRGCL…AILGKGDLIG (65 aa)) is cNMP-binding domain. The span at 691-724 (GSDTSGLSRFSRSPRLSQPRSESLGSSSDKTLPS) shows a compositional bias: polar residues. Disordered stretches follow at residues 691–749 (GSDT…LPNL), 772–803 (LVSS…RCSA), 821–875 (PDLS…EAEE), and 971–1017 (LLDL…DTFH). Over residues 772–787 (LVSSPSLSPSLSPALA) the composition is skewed to low complexity. Over residues 978 to 1002 (ILPPYPSEPDPLGPSPVPEASPPTP) the composition is skewed to pro residues. A compositionally biased stretch (polar residues) spans 1008–1017 (SFQSRSDTFH).

It belongs to the potassium channel family. H (Eag) (TC 1.A.1.20) subfamily. Kv12.3/KCNH4 sub-subfamily. In terms of assembly, the potassium channel is probably composed of a homo- or heterotetrameric complex of pore-forming alpha subunits that can associate with modulating beta subunits. As to expression, detected only in brain, in particular in the telencephalon. Detected in putamen and caudate nucleus, and at lower levels in cerebral cortex, occipital and hippocampus.

Its subcellular location is the membrane. The enzyme catalyses K(+)(in) = K(+)(out). In terms of biological role, pore-forming (alpha) subunit of a voltage-gated delayed rectifier. Activates at more negative voltages, exhibits fast prepulse-independent activation kinetics and deactivates much more slowly, but shows no inactivation. This chain is Voltage-gated delayed rectifier potassium channel KCNH4, found in Homo sapiens (Human).